Reading from the N-terminus, the 240-residue chain is MTVRYQIEQLGDSAMMIRFGEEINEQVNGIVHAAAAYIEEQPFPGFIECIPAFTSLTVFYDMYEVYKHLPQGISSPFESVKRDVEERLAEIAEDYEVNRRIVEIPVCYGGEFGPDLEEVAKINQLSPEEVIDIHTNGEYVVYMLGFAPGFPFLGGMSKRIAAPRKSSPRPSIPAGSVGIAGLQTGVYPISTPGGWQLIGKTPLALFRPQENPPTLLRAGDIVKFVRISEKDYHAYKEESN.

194–201 (GWQLIGKT) contacts ATP.

Belongs to the PxpB family. Forms a complex composed of PxpA, PxpB and PxpC. Interacts with PxpC (KipA). Interaction with PxpC prevents the inhibitory action of PxpB (KipI). Interacts with KinA. Two PxpB monomers bind via their C-domains at a conserved proline in the KinA dimerization and histidine-phosphotransfer (DHp) domain.

The enzyme catalyses 5-oxo-L-proline + ATP + 2 H2O = L-glutamate + ADP + phosphate + H(+). Catalyzes the cleavage of 5-oxoproline to form L-glutamate coupled to the hydrolysis of ATP to ADP and inorganic phosphate. In addition, is a potent inhibitor of the autophosphorylation reaction of kinase A (kinA) and its reverse reaction, but does not inhibit phosphate transfer to the Spo0F response regulator once kinase A is phosphorylated. Is an inhibitor of the catalytic domain of kinase A affecting the ATP/ADP reactions and not the phosphotransferase functions of this domain. The inhibition is non-competitive with respect to ATP. This chain is 5-oxoprolinase subunit B, found in Bacillus subtilis (strain 168).